The sequence spans 658 residues: Probable rhamnogalacturonate lyase B (658 aa).

Residues 1-19 (MRFAIPLGAACAWAGVALA) form the signal peptide. N-linked (GlcNAc...) asparagine glycans are attached at residues asparagine 110, asparagine 143, asparagine 239, asparagine 280, asparagine 522, asparagine 530, asparagine 592, and asparagine 633.

It belongs to the polysaccharide lyase 4 family.

The protein resides in the secreted. It carries out the reaction Endotype eliminative cleavage of L-alpha-rhamnopyranosyl-(1-&gt;4)-alpha-D-galactopyranosyluronic acid bonds of rhamnogalacturonan I domains in ramified hairy regions of pectin leaving L-rhamnopyranose at the reducing end and 4-deoxy-4,5-unsaturated D-galactopyranosyluronic acid at the non-reducing end.. Pectinolytic enzymes consist of four classes of enzymes: pectin lyase, polygalacturonase, pectin methylesterase and rhamnogalacturonase. Degrades the rhamnogalacturonan I (RG-I) backbone of pectin. This is Probable rhamnogalacturonate lyase B (rglB) from Aspergillus fumigatus (strain CBS 144.89 / FGSC A1163 / CEA10) (Neosartorya fumigata).